Here is a 102-residue protein sequence, read N- to C-terminus: Guanyl-specific ribonuclease Pc (102 aa).

2 disulfide bridges follow: Cys2–Cys10 and Cys6–Cys101. The active site involves His38. The active-site Proton acceptor is the Glu56. The Proton donor role is filled by His90.

Belongs to the ribonuclease N1/T1 family.

The catalysed reaction is [RNA] containing guanosine + H2O = an [RNA fragment]-3'-guanosine-3'-phosphate + a 5'-hydroxy-ribonucleotide-3'-[RNA fragment].. This Penicillium chrysogenum (Penicillium notatum) protein is Guanyl-specific ribonuclease Pc.